A 302-amino-acid chain; its full sequence is Methionyl-tRNA formyltransferase (302 aa).

(6S)-5,6,7,8-tetrahydrofolate is bound at residue 108-111; the sequence is SILP.

The protein belongs to the Fmt family.

It carries out the reaction L-methionyl-tRNA(fMet) + (6R)-10-formyltetrahydrofolate = N-formyl-L-methionyl-tRNA(fMet) + (6S)-5,6,7,8-tetrahydrofolate + H(+). In terms of biological role, attaches a formyl group to the free amino group of methionyl-tRNA(fMet). The formyl group appears to play a dual role in the initiator identity of N-formylmethionyl-tRNA by promoting its recognition by IF2 and preventing the misappropriation of this tRNA by the elongation apparatus. The polypeptide is Methionyl-tRNA formyltransferase (Sulfurimonas denitrificans (strain ATCC 33889 / DSM 1251) (Thiomicrospira denitrificans (strain ATCC 33889 / DSM 1251))).